The primary structure comprises 140 residues: Large ribosomal subunit protein bL17 (140 aa).

The protein belongs to the bacterial ribosomal protein bL17 family. In terms of assembly, part of the 50S ribosomal subunit. Contacts protein L32.

The chain is Large ribosomal subunit protein bL17 from Paramagnetospirillum magneticum (strain ATCC 700264 / AMB-1) (Magnetospirillum magneticum).